The chain runs to 325 residues: Hydroxymethylglutaryl-CoA lyase, mitochondrial (325 aa).

Residues Met1–Asp27 constitute a mitochondrion transit peptide. The region spanning Val33–Leu300 is the Pyruvate carboxyltransferase domain. Substrate is bound at residue Arg41. Asp42 is an a divalent metal cation binding site. Lys48 carries the N6-acetyllysine; alternate modification. Residue Lys48 is modified to N6-succinyllysine; alternate. The residue at position 111 (Lys111) is an N6-acetyllysine. N6-acetyllysine; alternate occurs at positions 137 and 179. Residues Lys137 and Lys179 each carry the N6-succinyllysine; alternate modification. 2 residues coordinate a divalent metal cation: His233 and His235. Residue Cys266 is part of the active site. An a divalent metal cation-binding site is contributed by Asn275. Positions Cys323–Leu325 match the Microbody targeting signal motif. At Lys324 the chain carries N6-acetyllysine.

The protein belongs to the HMG-CoA lyase family. As to quaternary structure, homodimer; disulfide-linked. Can also form homotetramers.

The protein resides in the mitochondrion matrix. It localises to the peroxisome. It carries out the reaction (3S)-3-hydroxy-3-methylglutaryl-CoA = acetoacetate + acetyl-CoA. Its pathway is metabolic intermediate metabolism; (S)-3-hydroxy-3-methylglutaryl-CoA degradation; acetoacetate from (S)-3-hydroxy-3-methylglutaryl-CoA: step 1/1. In terms of biological role, mitochondrial 3-hydroxy-3-methylglutaryl-CoA lyase that catalyzes a cation-dependent cleavage of (S)-3-hydroxy-3-methylglutaryl-CoA into acetyl-CoA and acetoacetate, a key step in ketogenesis. Terminal step in leucine catabolism. Ketone bodies (beta-hydroxybutyrate, acetoacetate and acetone) are essential as an alternative source of energy to glucose, as lipid precursors and as regulators of metabolism. The protein is Hydroxymethylglutaryl-CoA lyase, mitochondrial (HMGCL) of Macaca fascicularis (Crab-eating macaque).